The primary structure comprises 419 residues: Interferon regulatory factor 3 (419 aa).

T3 is subject to Phosphothreonine. Positions 5–111 (KPRILPWLVS…DPHKVYEFVT (107 aa)) form a DNA-binding region, IRF tryptophan pentad repeat. S14 carries the post-translational modification Phosphoserine. A Phosphothreonine modification is found at T75. Phosphoserine occurs at positions 97, 123, and 135. The segment at 140-419 (PKLFDGLILG…DMDFQATGNI (280 aa)) is mediates interaction with ZDHHC11. A Glycyl lysine isopeptide (Lys-Gly) (interchain with G-Cter in ISG15) cross-link involves residue K188. The segment at 194-353 (EQWEFEVTAF…MWPQDQPWVK (160 aa)) is interaction with HERC5. Residues T230, T237, and T246 each carry the phosphothreonine modification. Residues K353 and K359 each participate in a glycyl lysine isopeptide (Lys-Gly) (interchain with G-Cter in ISG15) cross-link. An N6-acetyllysine modification is found at K359. S378 bears the Phosphoserine mark. S379 is subject to Diphosphoserine. S379 is modified (phosphoserine; by TBK1). S388 carries the phosphoserine; by IKKE modification. At S390 the chain carries Phosphoserine. T396 carries the phosphothreonine modification.

This sequence belongs to the IRF family. In terms of assembly, monomer. Homodimer; phosphorylation-induced. Interacts (when phosphorylated) with CREBBP. Interacts with MAVS (via phosphorylated pLxIS motif). Interacts with TICAM1 (via phosphorylated pLxIS motif). Interacts with STING1 (via phosphorylated pLxIS motif). Interacts with IKBKE and TBK1. Interacts with TICAM2. Interacts with RBCK1. Interacts with HERC5. Interacts with DDX3X; the interaction allows the phosphorylation and activation of IRF3 by IKBKE. Interacts with TRIM21 and ULK1, in the presence of TRIM21; this interaction leads to IRF3 degradation by autophagy. Interacts with RIOK3; RIOK3 probably mediates the interaction of TBK1 with IRF3. Interacts with ILRUN; the interaction inhibits IRF3 binding to its DNA consensus sequence. Interacts with LYAR; this interaction impairs IRF3 DNA-binding activity. Interacts with TRAF3. Interacts with ZDHHC11; ZDHHC11 recruits IRF3 to STING1 upon DNA virus infection and thereby promotes IRF3 activation. Interacts with HSP90AA1; the interaction mediates IRF3 association with TOMM70. Interacts with BCL2; the interaction decreases upon Sendai virus infection. Interacts with BAX; the interaction is direct, increases upon virus infection and mediates the formation of the apoptosis complex TOMM70:HSP90AA1:IRF3:BAX. Interacts with DDX56. Interacts with NBR1. In terms of processing, constitutively phosphorylated on many Ser/Thr residues. Activated following phosphorylation by TBK1 and IKBKE. Innate adapter proteins, such as MAVS, STING1 or TICAM1, are first activated by viral RNA, cytosolic DNA, and bacterial lipopolysaccharide (LPS), respectively, leading to activation of the kinases TBK1 and IKBKE. These kinases then phosphorylate the adapter proteins on the pLxIS motif, leading to recruitment of IRF3, thereby licensing IRF3 for phosphorylation by TBK1. Phosphorylation at Ser-379 is followed by pyrophosphorylation at the same residue, promoting phosphorylation at Ser-388. Phosphorylated IRF3 dissociates from the adapter proteins, dimerizes, and then enters the nucleus to induce IFNs. Post-translationally, pyrophosphorylated by UAP1 following phosphorylation at Ser-379 by TBK1. Pyrophosphorylation promotes subsequent phosphorylation at Ser-388, leading to homodimerization of IRF3. Acetylation at Lys-359 by KAT8 inhibits recruimtent to promoters and transcription factor activity. Acetylation by KAT8 is promoted by phosphorylation at Ser-388. In terms of processing, ubiquitinated; ubiquitination involves RBCK1 leading to proteasomal degradation. Polyubiquitinated; ubiquitination involves TRIM21 leading to proteasomal degradation. Ubiquitinated by UBE3C, leading to its degradation. Deubiquitinated by USP5 on both 'Lys-48'-linked unanchored and 'Lys-63'-linked anchored polyubiquitin, leading to inhibition of anti-RNA viral innate immunity. Post-translationally, ISGylated by HERC5 resulting in sustained IRF3 activation and in the inhibition of IRF3 ubiquitination by disrupting PIN1 binding. The phosphorylation state of IRF3 does not alter ISGylation. Proteolytically cleaved by apoptotic caspases during apoptosis, leading to its inactivation. Cleavage by CASP3 during virus-induced apoptosis inactivates it, preventing cytokine overproduction.

It is found in the cytoplasm. Its subcellular location is the nucleus. The protein resides in the mitochondrion. In the absence of viral infection, maintained as a monomer in an autoinhibited state. Phosphorylation by TBK1 and IKBKE disrupts this autoinhibition leading to the liberation of the DNA-binding and dimerization activities and its nuclear localization where it can activate type I IFN and ISG genes. Phosphorylation and activation follow the following steps: innate adapter proteins, such as MAVS, STING1 or TICAM1, are first activated by viral RNA, cytosolic DNA and bacterial lipopolysaccharide (LPS), respectively, leading to activation of the kinases TBK1 and IKBKE. These kinases then phosphorylate the adapter proteins on their pLxIS motif, leading to recruitment of IRF3, thereby licensing IRF3 for phosphorylation by TBK1. Phosphorylated IRF3 dissociates from the adapter proteins, dimerizes, and then enters the nucleus to induce IFNs. Functionally, key transcriptional regulator of type I interferon (IFN)-dependent immune responses which plays a critical role in the innate immune response against DNA and RNA viruses. Regulates the transcription of type I IFN genes (IFN-alpha and IFN-beta) and IFN-stimulated genes (ISG) by binding to an interferon-stimulated response element (ISRE) in their promoters. Acts as a more potent activator of the IFN-beta (IFNB) gene than the IFN-alpha (IFNA) gene and plays a critical role in both the early and late phases of the IFNA/B gene induction. Found in an inactive form in the cytoplasm of uninfected cells and following viral infection, double-stranded RNA (dsRNA), or toll-like receptor (TLR) signaling, is phosphorylated by IKBKE and TBK1 kinases. This induces a conformational change, leading to its dimerization and nuclear localization and association with CREB binding protein (CREBBP) to form dsRNA-activated factor 1 (DRAF1), a complex which activates the transcription of the type I IFN and ISG genes. Can activate distinct gene expression programs in macrophages and can induce significant apoptosis in primary macrophages. The polypeptide is Interferon regulatory factor 3 (Irf3) (Mus musculus (Mouse)).